The sequence spans 530 residues: S-adenosylhomocysteine hydrolase-like protein 1 (530 aa).

The residue at position 1 (methionine 1) is an N-acetylmethionine. Serine 2 carries the N-acetylserine modification. Serine 2 is subject to Phosphoserine. At lysine 40 the chain carries N6-acetyllysine. Residues 53–103 (KFPTKTGRRSLSRSISQSSTDSYSSAASYTDSSDDEVSPREKQQTNSKGSS) are disordered. The span at 64–83 (SRSISQSSTDSYSSAASYTD) shows a compositional bias: low complexity. Residues 65 to 92 (RSISQSSTDSYSSAASYTDSSDDEVSPR) are PEST. Residues serine 68, serine 71, serine 74, serine 77, and serine 84 each carry the phosphoserine modification. An interaction with BCL2L10 region spans residues 138 to 201 (QGEKPLAGAK…EAGVAVFAWK (64 aa)). 5 residues coordinate substrate: threonine 155, aspartate 229, glutamate 254, lysine 284, and aspartate 288. Positions 281 to 448 (SVTKQKFDNL…EGRLLNLSCS (168 aa)) are NAD binding. NAD(+) contacts are provided by residues 318 to 322 (GYGEV), glutamate 341, and asparagine 376. Position 391 is a phosphoserine (serine 391). NAD(+) is bound at residue 397-399 (MGH). The interval 520–530 (NGPFKPNYYRY) is PDZ-binding.

Belongs to the adenosylhomocysteinase family. As to quaternary structure, forms multimers. Forms heteromultimers with AHCYL2 (via the C-terminal region). Interacts (when phosphorylated) with ITPR1 (when not phosphorylated); the interaction suppresses inositol 1,4,5-trisphosphate binding to ITPR1. Interacts with BCL2L10; this strengthens the interaction of AHCYL1 with ITPR1. Interacts with CFTR and SLC26A6; the interactions take place once AHCYL1 is released from ITPR1 and increase CFTR and SLC26A6 activities. Interacts with RRM1; in a phosphorylation- and (dATP)-dependent manner. Interacts (via PEST domain when phosphorylated) with SLC4A4 isoform 1 but not isoform 2; the interaction increases SLC4A4 isoform 1 activity. Interacts (when phosphorylated) with SLC9A3; the interaction is required for SLC9A3 apical location and activity. Interacts (when phosphorylated) with FIP1L1; the interaction is direct and associates AHCYL1 with the CPSF complex and RNA. Interacts with PAPOLA. Interacts with ZCCHC4. Interacts with AHCY. Requires NAD(+) as cofactor. In terms of processing, phosphorylated at Ser/Thr residues between Ser-68 and Thr-72 in the PEST region: required for interaction with dATP-bound RRM1 and ITPR1. Phosphorylation at Ser-68 by PRKD1 and CAMK4 is required for further phosphorylations by CSNK1A1. Phosphorylation is induced by oxidative stress. Probably phosphorylated by CAMK2A; phosphorylation at Ser-68 may be required for interaction with SLC9A3. Dephosphorylated in response to apoptotic stress conditions which causes translocation of both AHCYL1 and BCL2L10 from mitochondria-associated endoplasmic reticulum membranes and promotes apoptosis. As to expression, expressed in dendritic cells.

The protein localises to the endoplasmic reticulum. Its subcellular location is the cytoplasm. The protein resides in the cytosol. It is found in the apical cell membrane. It localises to the microsome. Multifaceted cellular regulator which coordinates several essential cellular functions including regulation of epithelial HCO3(-) and fluid secretion, mRNA processing and DNA replication. Regulates ITPR1 sensitivity to inositol 1,4,5-trisphosphate, competing for the common binding site and acting as endogenous 'pseudoligand' whose inhibitory activity can be modulated by its phosphorylation status. Promotes the formation of contact points between the endoplasmic reticulum (ER) and mitochondria, facilitating transfer of Ca(2+) from the ER to mitochondria. Under normal cellular conditions, functions cooperatively with BCL2L10 to limit ITPR1-mediated Ca(2+) release but, under apoptotic stress conditions, dephosphorylated which promotes dissociation of both AHCYL1 and BCL2L10 from mitochondria-associated endoplasmic reticulum membranes, inhibits BCL2L10 interaction with ITPR1 and leads to increased Ca(2+) transfer to mitochondria which promotes apoptosis. In the pancreatic and salivary ducts, at resting state, attenuates inositol 1,4,5-trisphosphate-induced calcium release by interacting with ITPR1. When extracellular stimuli induce ITPR1 phosphorylation or inositol 1,4,5-trisphosphate production, dissociates from ITPR1 to interact with CFTR and SLC26A6, mediating their synergistic activation by calcium and cAMP that stimulates the epithelial secretion of electrolytes and fluid. Also activates basolateral SLC4A4 isoform 1 to coordinate fluid and HCO3(-) secretion. Inhibits the effect of STK39 on SLC4A4 and CFTR by recruiting PP1 phosphatase which activates SLC4A4, SLC26A6 and CFTR through dephosphorylation. Mediates the induction of SLC9A3 surface expression produced by Angiotensin-2. Depending on the cell type, activates SLC9A3 in response to calcium or reverses SLC9A3R2-dependent calcium inhibition. May modulate the polyadenylation state of specific mRNAs, both by controlling the subcellular location of FIP1L1 and by inhibiting PAPOLA activity, in response to a stimulus that alters its phosphorylation state. Acts as a (dATP)-dependent inhibitor of ribonucleotide reductase large subunit RRM1, controlling the endogenous dNTP pool and ensuring normal cell cycle progression. In vitro does not exhibit any S-adenosyl-L-homocysteine hydrolase activity. This is S-adenosylhomocysteine hydrolase-like protein 1 from Homo sapiens (Human).